A 635-amino-acid polypeptide reads, in one-letter code: Very-long-chain aldehyde decarbonylase GL1-6 (635 aa).

4 helical membrane-spanning segments follow: residues 46-66 (LLNFMVFPMLLLRLLYGQLWI), 100-120 (IILTALVFYLVSATMPQAQVA), 127-147 (GMVVTAVLHAGPVEFLYYWLH), and 183-203 (VVYFVLLAIPILSTVATGTVS). One can recognise a Fatty acid hydroxylase domain in the interval 139–273 (VEFLYYWLHR…MPVYDYIYGT (135 aa)).

This sequence belongs to the sterol desaturase family. As to quaternary structure, homodimer.

The protein resides in the endoplasmic reticulum membrane. The enzyme catalyses a long-chain fatty aldehyde + 2 NADPH + O2 + H(+) = a long-chain alkane + formate + 2 NADP(+) + H2O. Functionally, aldehyde decarbonylase involved in the conversion of aldehydes to alkanes. Core component of a very-long-chain alkane synthesis complex. This chain is Very-long-chain aldehyde decarbonylase GL1-6, found in Oryza sativa subsp. indica (Rice).